An 86-amino-acid chain; its full sequence is Weak toxin 2 (86 aa).

A signal peptide spans 1 to 23 (MKTLLLTLVVVAIVCLDLGYTLT). Cystine bridges form between cysteine 24/cysteine 45, cysteine 27/cysteine 32, cysteine 38/cysteine 63, cysteine 67/cysteine 78, and cysteine 79/cysteine 84.

The protein belongs to the three-finger toxin family. Ancestral subfamily. Orphan group II sub-subfamily. Expressed by the venom gland.

The protein localises to the secreted. Its function is as follows. Binds with low affinity to muscular (alpha-1-beta-1-delta-epsilon/CHRNA1-CHRNB1-CHRND-CHRNE) and very low affinity to neuronal (alpha-7/CHRNA7) nicotinic acetylcholine receptor (nAChR). This chain is Weak toxin 2, found in Bungarus candidus (Malayan krait).